Reading from the N-terminus, the 101-residue chain is Large ribosomal subunit protein uL24 (101 aa).

This sequence belongs to the universal ribosomal protein uL24 family. In terms of assembly, part of the 50S ribosomal subunit.

Functionally, one of two assembly initiator proteins, it binds directly to the 5'-end of the 23S rRNA, where it nucleates assembly of the 50S subunit. Its function is as follows. One of the proteins that surrounds the polypeptide exit tunnel on the outside of the subunit. The sequence is that of Large ribosomal subunit protein uL24 from Streptococcus equi subsp. zooepidemicus (strain H70).